Here is a 329-residue protein sequence, read N- to C-terminus: MELELDLLTGLQLLSEYCPRVTPNAPPRRASVAVIIAFKESQDFSNPKWPQCIPITSVPYVLLIQRSFRDTDRWSGHMALPGGTRSLTDKSDIQTAHRETLEEVGIDLRKEHAHFVGALDERVITSNWGQFPLLLLSSFVFILPYMPSLRLQESEVFSAQWYPLADLLLPECQTRIQIDSSRALKKTYPRFIKTLFHLAVGNLMYSAIRLEFDPSSATYSLPPYQRPFLRGITHSIFVDLFIFLSPSSARHCLCWSLPYFQHYDLRFIASFFTQFYRLRLHQVYPRGNWVFTCLNGYYPYLKLTLLVGFLFRLFLVYLLFLIISAYYKS.

Positions 27-185 (PRRASVAVII…IQIDSSRALK (159 aa)) constitute a Nudix hydrolase domain. 3 consecutive transmembrane segments (helical) span residues 123 to 143 (VITSNWGQFPLLLLSSFVFIL), 227 to 247 (PFLRGITHSIFVDLFIFLSPS), and 303 to 323 (LTLLVGFLFRLFLVYLLFLII).

The protein resides in the membrane. This is an uncharacterized protein from Schizosaccharomyces pombe (strain 972 / ATCC 24843) (Fission yeast).